The sequence spans 212 residues: Claudin-7-A (212 aa).

The Cytoplasmic portion of the chain corresponds to 1–7 (MANSGVQ). A helical transmembrane segment spans residues 8 to 28 (LLGFGLSLIGIIGLIVGTILP). The Extracellular portion of the chain corresponds to 29-81 (QWKMSAYVGDSIITAVATYQGLWMSCAFQSTGQLQCKIYDSILQLDSDLQATR). Residues 82–102 (ALMIVGIIVSIAGLGVASIGM) form a helical membrane-spanning segment. Residues 103 to 119 (KCTTCGADDKVRKTRTA) lie on the Cytoplasmic side of the membrane. A helical transmembrane segment spans residues 120-140 (MTGGIILLVGALCAVVACSWF). Residues 141-162 (AHNVIRAFYNPFTPVNTKFEFG) are Extracellular-facing. The helical transmembrane segment at 163 to 183 (AAIFIAWGGSFLDVLGGAMLA) threads the bilayer. Topologically, residues 184 to 212 (ASCPRSKQVSKYPKSNSTRSANGSNKEYV) are cytoplasmic. A disordered region spans residues 191 to 212 (QVSKYPKSNSTRSANGSNKEYV).

It belongs to the claudin family.

It is found in the cell junction. It localises to the tight junction. Its subcellular location is the cell membrane. Functionally, plays a major role in tight junction-specific obliteration of the intercellular space. The chain is Claudin-7-A from Danio rerio (Zebrafish).